The sequence spans 57 residues: DNA-directed RNA polymerase subunit Rpo6 (57 aa).

It belongs to the archaeal Rpo6/eukaryotic RPB6 RNA polymerase subunit family. In terms of assembly, part of the RNA polymerase complex.

It localises to the cytoplasm. The enzyme catalyses RNA(n) + a ribonucleoside 5'-triphosphate = RNA(n+1) + diphosphate. In terms of biological role, DNA-dependent RNA polymerase (RNAP) catalyzes the transcription of DNA into RNA using the four ribonucleoside triphosphates as substrates. This is DNA-directed RNA polymerase subunit Rpo6 from Haloarcula marismortui (strain ATCC 43049 / DSM 3752 / JCM 8966 / VKM B-1809) (Halobacterium marismortui).